The chain runs to 208 residues: Methenyltetrahydrofolate cyclohydrolase (208 aa).

The chain crosses the membrane as a helical span at residues 25–46; the sequence is GAAAISGAMGAALVSMVCNLTI.

It belongs to the cyclodeaminase/cyclohydrolase family. As to quaternary structure, homodimer.

The protein localises to the membrane. The catalysed reaction is (6R)-5,10-methenyltetrahydrofolate + H2O = (6R)-10-formyltetrahydrofolate + H(+). It participates in one-carbon metabolism; formaldehyde assimilation via serine pathway. Its function is as follows. Required for both C1 and C2 metabolism. The chain is Methenyltetrahydrofolate cyclohydrolase (fchA) from Methylorubrum extorquens (strain ATCC 14718 / DSM 1338 / JCM 2805 / NCIMB 9133 / AM1) (Methylobacterium extorquens).